The chain runs to 95 residues: Co-chaperonin GroES (95 aa).

It belongs to the GroES chaperonin family. In terms of assembly, heptamer of 7 subunits arranged in a ring. Interacts with the chaperonin GroEL.

The protein resides in the cytoplasm. Together with the chaperonin GroEL, plays an essential role in assisting protein folding. The GroEL-GroES system forms a nano-cage that allows encapsulation of the non-native substrate proteins and provides a physical environment optimized to promote and accelerate protein folding. GroES binds to the apical surface of the GroEL ring, thereby capping the opening of the GroEL channel. The polypeptide is Co-chaperonin GroES (Ruegeria sp. (strain TM1040) (Silicibacter sp.)).